The primary structure comprises 536 residues: CRISPR-associated DNA-binding protein Cas12m (536 aa).

A recognition domain (REC1-N) region spans residues 1 to 59 (MPFGKKARHVKAYQFGADAPQEGMEAVLEQHRLRTDYYNALVEMELRQREERTALLANL). Residues 60 to 105 (AAESGLESPNQVYERLKAAGEKGIRKHPEYVAARERQKALYGHPRL) are recognition domain (REC2). The interval 106-159 (LELQSRQREERNALRRSFGAKGLYSSNYLDVERAFDKARQSPELRFRRYSPHEG) is recognition domain (REC1-C). Residues 160-257 (RLAVLYTEGL…RWTVSVVVEV (98 aa)) are wedge domain (WED). The segment at 258–270 (EGPPVASPTGRGA) is linker. A ruvC-I region spans residues 271–481 (VAVDLGWRRV…QRGKPVRKLN (211 aa)). The segment at 482 to 516 (PAHTTTDCHACGGALVGDPAKELRLYCPTCERFYD) is target nucleic-acid binding (TNB). Residues cysteine 489, cysteine 492, cysteine 508, and cysteine 511 each coordinate Zn(2+). Positions 517 to 536 (QDENAARNLLRRAQEVQAQV) are ruvC-II. Residue aspartate 518 participates in Mg(2+) binding.

Belongs to the CRISPR-associated DNA-binding protein Cas12m family. The cofactor is Mg(2+). It depends on Zn(2+) as a cofactor.

Its activity is regulated as follows. Pre-crRNA processing is inhibited by EDTA. Its function is as follows. CRISPR (clustered regularly interspaced short palindromic repeat), is an adaptive immune system that provides protection against mobile genetic elements (viruses, transposable elements and conjugative plasmids). CRISPR clusters contain sequences complementary to antecedent mobile elements and target invading nucleic acids. CRISPR clusters are transcribed and processed into CRISPR RNA (crRNA). Recognizes a short motif in the CRISPR repeat sequences (the 5' PAM or protospacer adjacent motif, 5'-TT/CN-3' in this organism) to help distinguish self versus nonself, as targets within the bacterial CRISPR locus do not have PAMs. Cas12m-crRNA binds DNA in a PAM-dependent, crRNA-guided fashion. DNA-binding probably inhibits transcription, leading to gene silencing. No dsDNA, ssDNA or RNA nuclease activity is seen for the crRNA-Cas12m complex. Upon expression in E.coli as a CRISPR region preferentially binds to its associated crRNA. Is required to process pre-crRNA to mature crRNA without a tracrRNA; processing is Mg(2+)-dependent and does not require the predicted RuvC domain catalytic site. The chain is CRISPR-associated DNA-binding protein Cas12m from Allomeiothermus silvanus (strain ATCC 700542 / DSM 9946 / NBRC 106475 / NCIMB 13440 / VI-R2) (Thermus silvanus).